The following is a 423-amino-acid chain: Histidinol dehydrogenase (423 aa).

3 residues coordinate NAD(+): tyrosine 116, glutamine 177, and asparagine 200. Substrate is bound by residues serine 223, glutamine 245, and histidine 248. Zn(2+) is bound by residues glutamine 245 and histidine 248. Active-site proton acceptor residues include glutamate 313 and histidine 314. Residues histidine 314, aspartate 347, glutamate 401, and histidine 406 each coordinate substrate. Residue aspartate 347 coordinates Zn(2+). Histidine 406 lines the Zn(2+) pocket.

This sequence belongs to the histidinol dehydrogenase family. It depends on Zn(2+) as a cofactor.

The enzyme catalyses L-histidinol + 2 NAD(+) + H2O = L-histidine + 2 NADH + 3 H(+). It participates in amino-acid biosynthesis; L-histidine biosynthesis; L-histidine from 5-phospho-alpha-D-ribose 1-diphosphate: step 9/9. In terms of biological role, catalyzes the sequential NAD-dependent oxidations of L-histidinol to L-histidinaldehyde and then to L-histidine. The protein is Histidinol dehydrogenase of Staphylococcus saprophyticus subsp. saprophyticus (strain ATCC 15305 / DSM 20229 / NCIMB 8711 / NCTC 7292 / S-41).